Consider the following 263-residue polypeptide: (R)-S-adenosyl-L-methionine hydrolase (263 aa).

Residues aspartate 18, aspartate 82, and asparagine 181 each coordinate adenosine. Residues asparagine 181, tyrosine 221, serine 234, glutamate 239, and methionine 244 each coordinate (R)-S-adenosyl-L-methionine.

Belongs to the SAM hydrolase / SAM-dependent halogenase family. As to quaternary structure, homotrimer.

It catalyses the reaction (R)-S-adenosyl-L-methionine + H2O = adenosine + L-methionine + H(+). Its function is as follows. Catalyzes the hydrolysis of S-adenosyl-L-methionine (SAM) into adenosine and L-methionine. Does not have chlorinase or fluorinase activity. This Methanocaldococcus jannaschii (strain ATCC 43067 / DSM 2661 / JAL-1 / JCM 10045 / NBRC 100440) (Methanococcus jannaschii) protein is (R)-S-adenosyl-L-methionine hydrolase.